The primary structure comprises 419 residues: Carboxypeptidase A1 (419 aa).

Positions 1–16 (MKRLLILSLLLEAVCG) are cleaved as a signal peptide. A propeptide spans 17–110 (NENFVGHQVL…KQQMSAFQAR (94 aa)) (activation peptide). The Peptidase M14 domain maps to 121–414 (TYHTLDEIYE…LALLTIMDHT (294 aa)). The Zn(2+) site is built by H179 and E182. Substrate-binding positions include 179–182 (HSRE), R237, and 254–255 (NR). A disulfide bridge connects residues C248 and C271. Zn(2+) is bound at residue H306. Substrate-binding positions include 307-308 (SY) and Y358. E380 functions as the Proton donor/acceptor in the catalytic mechanism.

The protein belongs to the peptidase M14 family. In terms of assembly, monomer. May form a complex with proelastase 2. Zn(2+) is required as a cofactor.

The protein localises to the secreted. It carries out the reaction Release of a C-terminal amino acid, but little or no action with -Asp, -Glu, -Arg, -Lys or -Pro.. It catalyses the reaction leukotriene C4 + H2O = leukotriene F4 + glycine. Its function is as follows. Carboxypeptidase that catalyzes the release of a C-terminal amino acid, but has little or no action with -Asp, -Glu, -Arg, -Lys or -Pro. Catalyzes the conversion of leukotriene C4 to leukotriene F4 via the hydrolysis of an amide bond. The sequence is that of Carboxypeptidase A1 from Rattus norvegicus (Rat).